Reading from the N-terminus, the 349-residue chain is Eukaryotic translation initiation factor 3 subunit I (349 aa).

WD repeat units lie at residues 8-49 (GHER…GTLE), 51-91 (HIGT…QSWE), 93-135 (PTPV…DYTK), 148-187 (SDAKKVTVAGWSANGDFIIAGHEDGYVSKYNSSTGEFIET), 197-239 (EKIA…KVYK), and 295-336 (GHFG…FEFD).

It belongs to the eIF-3 subunit I family. As to quaternary structure, component of the eukaryotic translation initiation factor 3 (eIF-3) complex.

The protein localises to the cytoplasm. Component of the eukaryotic translation initiation factor 3 (eIF-3) complex, which is involved in protein synthesis of a specialized repertoire of mRNAs and, together with other initiation factors, stimulates binding of mRNA and methionyl-tRNAi to the 40S ribosome. The eIF-3 complex specifically targets and initiates translation of a subset of mRNAs involved in cell proliferation. The chain is Eukaryotic translation initiation factor 3 subunit I from Debaryomyces hansenii (strain ATCC 36239 / CBS 767 / BCRC 21394 / JCM 1990 / NBRC 0083 / IGC 2968) (Yeast).